A 425-amino-acid polypeptide reads, in one-letter code: Kynurenine/alpha-aminoadipate aminotransferase, mitochondrial (425 aa).

Residues 1–29 (MNYARFITAASAARNPSPIRTMTDILSRG) constitute a mitochondrion transit peptide. Arg-20 contributes to the substrate binding site. Lys-69 carries the N6-acetyllysine modification. Positions 74 and 142 each coordinate substrate. Position 179 is an N6-acetyllysine (Lys-179). A disordered region spans residues 181-208 (EDAKNPQKNTPKFLYTVPNGNNPTGNSL). Residues 198–208 (PNGNNPTGNSL) are compositionally biased toward polar residues. Asn-202 is a binding site for substrate. Lys-263 bears the N6-(pyridoxal phosphate)lysine; alternate mark. Lys-263, Lys-339, and Lys-367 each carry N6-acetyllysine; alternate. 3 positions are modified to N6-succinyllysine; alternate: Lys-263, Lys-339, and Lys-367. A substrate-binding site is contributed by Arg-399. Residue Lys-422 is modified to N6-acetyllysine.

It belongs to the class-I pyridoxal-phosphate-dependent aminotransferase family. In terms of assembly, homodimer. The cofactor is pyridoxal 5'-phosphate. As to expression, higher expression in the liver. Also found in heart, brain, kidney, pancreas, prostate, testis and ovary.

Its subcellular location is the mitochondrion. It carries out the reaction glycine + 2-oxoglutarate = glyoxylate + L-glutamate. It catalyses the reaction L-kynurenine + 2-oxoglutarate = kynurenate + L-glutamate + H2O. The enzyme catalyses L-kynurenine + glyoxylate = kynurenate + glycine + H2O. The catalysed reaction is 3-hydroxy-L-kynurenine + glyoxylate = xanthurenate + glycine + H2O. It carries out the reaction 2-oxohexanoate + L-kynurenine = L-2-aminohexanoate + kynurenate + H2O. It catalyses the reaction 3-phenylpyruvate + L-kynurenine = kynurenate + L-phenylalanine + H2O. The enzyme catalyses 4-methylsulfanyl-2-oxobutanoate + L-kynurenine = kynurenate + L-methionine + H2O. The catalysed reaction is 2-oxo-3-sulfanylpropanoate + L-kynurenine = kynurenate + L-cysteine + H2O. It carries out the reaction indole-3-pyruvate + L-kynurenine = kynurenate + L-tryptophan + H2O. It catalyses the reaction 2-oxopentanoate + L-kynurenine = L-2-aminopentanoate + kynurenate + H2O. The enzyme catalyses 4-methyl-2-oxopentanoate + L-kynurenine = kynurenate + L-leucine + H2O. The catalysed reaction is L-2-aminoadipate + 2-oxoglutarate = 2-oxoadipate + L-glutamate. It carries out the reaction glyoxylate + L-methionine = 4-methylsulfanyl-2-oxobutanoate + glycine. It catalyses the reaction L-2-aminoadipate + glyoxylate = 2-oxoadipate + glycine. The enzyme catalyses L-tyrosine + glyoxylate = 3-(4-hydroxyphenyl)pyruvate + glycine. The catalysed reaction is glyoxylate + L-phenylalanine = 3-phenylpyruvate + glycine. It carries out the reaction L-tryptophan + glyoxylate = indole-3-pyruvate + glycine. It catalyses the reaction L-leucine + glyoxylate = 4-methyl-2-oxopentanoate + glycine. The enzyme catalyses 2-oxobutanoate + L-kynurenine = (2S)-2-aminobutanoate + kynurenate + H2O. The catalysed reaction is 2-oxoadipate + L-kynurenine = L-2-aminoadipate + kynurenate + H2O. It participates in amino-acid degradation; L-lysine degradation via saccharopine pathway; glutaryl-CoA from L-lysine: step 4/6. With respect to regulation, kynurenine transaminase activity is competitively inhibited by aminoadipate, asparagine, glutamate, histidine, cysteine, lysine, 3-hydroxy-kynurenine and phenylalanine. In terms of biological role, transaminase with broad substrate specificity. Has transaminase activity towards aminoadipate, kynurenine, methionine and glutamate. Shows activity also towards tryptophan, aspartate and hydroxykynurenine. Accepts a variety of oxo-acids as amino-group acceptors, with a preference for 2-oxoglutarate, 2-oxocaproic acid, phenylpyruvate and alpha-oxo-gamma-methiol butyric acid. Can also use glyoxylate as amino-group acceptor (in vitro). The protein is Kynurenine/alpha-aminoadipate aminotransferase, mitochondrial of Homo sapiens (Human).